We begin with the raw amino-acid sequence, 1046 residues long: Protein jim lovell (1046 aa).

Residues 54 to 109 (TSDHAPMHSTPPTTPPTPPPLPLNMSQSASAVTEAATPENSLPATPPSEGALAVPS) form a disordered region. Residues 65–75 (PTTPPTPPPLP) are compositionally biased toward pro residues. Residues 140-205 (VDVTLVCAET…MYRGEISVPQ (66 aa)) form the BTB domain. Disordered stretches follow at residues 290–342 (LRRK…DAES), 355–501 (AERD…KLQD), 632–655 (PPFG…PGQA), 686–719 (EFGP…GMSS), 758–791 (RDMP…RSWT), 851–947 (EMLQ…APNA), and 998–1046 (DCKS…TGHD). A compositionally biased stretch (basic and acidic residues) spans 294–303 (REQESDRDLE). The segment covering 315–324 (PRRKQARPRR) has biased composition (basic residues). Polar residues predominate over residues 365–380 (QDNSQGEAEKISSSPA). Basic and acidic residues predominate over residues 383 to 412 (LVERAKEQKSMKEEGSDQPRSLNENHHQLE). A compositionally biased stretch (acidic residues) spans 413-432 (LDDEDDDDQDHEEEEEQDIE). Over residues 433-443 (ELIHTTNELRR) the composition is skewed to basic and acidic residues. The segment covering 445 to 454 (AAAAAANAAA) has biased composition (low complexity). The segment covering 636–651 (GHNGGHPGNSGPGNGC) has biased composition (gly residues). Positions 703–714 (DGPPHPPSPLPF) are enriched in pro residues. A compositionally biased stretch (basic residues) spans 768-777 (LKKKMPRPKG). The region spanning 781–833 (APRGGPPRSWTNTELTEALQHVWNKKMTTSQASRIFGIPYNSLLMYVRGKYGK) is the HTH psq-type domain. Over residues 866 to 881 (KNEKSKERKEKEKDKN) the composition is skewed to basic and acidic residues. 2 stretches are compositionally biased toward low complexity: residues 882 to 897 (SMSS…SQGG) and 912 to 925 (LGPM…LGLP).

In terms of tissue distribution, initially expressed at blastoderm stage, transient accumulation at dorso-lateral positions of the embryo and differences along the longitudinal axis. At later stages of embryogenesis, expression is found exclusively in neural anlagen. Expressed in 4 posterior-most ventral unpaired median interneurons (VUM) neurons, VUM interneurons and one progeny of the median neuroblast (MNB).

It localises to the nucleus. Functionally, has a regulatory role during midline cell development. This is Protein jim lovell (lov) from Drosophila melanogaster (Fruit fly).